Consider the following 229-residue polypeptide: Large ribosomal subunit protein uL1 (229 aa).

It belongs to the universal ribosomal protein uL1 family. Part of the 50S ribosomal subunit.

Its function is as follows. Binds directly to 23S rRNA. The L1 stalk is quite mobile in the ribosome, and is involved in E site tRNA release. Functionally, protein L1 is also a translational repressor protein, it controls the translation of the L11 operon by binding to its mRNA. This is Large ribosomal subunit protein uL1 from Pediococcus pentosaceus (strain ATCC 25745 / CCUG 21536 / LMG 10740 / 183-1w).